A 942-amino-acid polypeptide reads, in one-letter code: Ubiquitin carboxyl-terminal hydrolase 33 (942 aa).

The UBP-type zinc finger occupies 37–140 (NHCPHLDSVG…PSLPHVRQPH (104 aa)). Zn(2+) contacts are provided by cysteine 39, histidine 41, cysteine 61, cysteine 64, cysteine 74, cysteine 79, cysteine 84, histidine 91, histidine 95, histidine 101, cysteine 114, and cysteine 117. The USP domain maps to 185–715 (TGLKNIGNTC…EAYVLFYRKS (531 aa)). Cysteine 194 serves as the catalytic Nucleophile. Residues 294–357 (VEEDPQTITT…MLIQDDENNS (64 aa)) form a disordered region. Positions 315 to 327 (DVDFQSCESCSNS) are enriched in polar residues. At serine 377 the chain carries Phosphoserine. The segment covering 419 to 431 (DLSTPQILPSNEG) has biased composition (polar residues). Positions 419-469 (DLSTPQILPSNEGVNPRLSASPPKSGNLWPGLAPPHKKAQSASPKRKKQHK) are disordered. Serine 439 is subject to Phosphoserine. Residues 453–469 (PHKKAQSASPKRKKQHK) show a composition bias toward basic residues. Histidine 673 serves as the catalytic Proton acceptor. 2 consecutive DUSP domains span residues 717–810 (EEAQ…LYIC) and 818–921 (EKIE…RPPV).

It belongs to the peptidase C19 family. USP20/USP33 subfamily. In terms of assembly, interacts with VHL, leading to its ubiquitination and subsequent degradation. Interacts with ARRB1 and ARRB2. Interacts with ADRB2. Interacts with DIO2. Interacts with ROBO1. Interacts with SELENBP1; in a selenium-dependent manner. Interacts with CCP110. In terms of processing, ubiquitinated via a VHL-dependent pathway for proteasomal degradation. In terms of tissue distribution, widely expressed.

Its subcellular location is the cytoplasm. The protein localises to the perinuclear region. The protein resides in the cytoskeleton. It is found in the microtubule organizing center. It localises to the centrosome. Its subcellular location is the golgi apparatus. It catalyses the reaction Thiol-dependent hydrolysis of ester, thioester, amide, peptide and isopeptide bonds formed by the C-terminal Gly of ubiquitin (a 76-residue protein attached to proteins as an intracellular targeting signal).. Its function is as follows. Deubiquitinating enzyme involved in various processes such as centrosome duplication, cellular migration and beta-2 adrenergic receptor/ADRB2 recycling. Involved in regulation of centrosome duplication by mediating deubiquitination of CCP110 in S and G2/M phase, leading to stabilize CCP110 during the period which centrioles duplicate and elongate. Involved in cell migration via its interaction with intracellular domain of ROBO1, leading to regulate the Slit signaling. Plays a role in commissural axon guidance cross the ventral midline of the neural tube in a Slit-dependent manner, possibly by mediating the deubiquitination of ROBO1. Acts as a regulator of G-protein coupled receptor (GPCR) signaling by mediating the deubiquitination of beta-arrestins (ARRB1 and ARRB2) and beta-2 adrenergic receptor (ADRB2). Plays a central role in ADRB2 recycling and resensitization after prolonged agonist stimulation by constitutively binding ADRB2, mediating deubiquitination of ADRB2 and inhibiting lysosomal trafficking of ADRB2. Upon dissociation, it is probably transferred to the translocated beta-arrestins, leading to beta-arrestins deubiquitination and disengagement from ADRB2. This suggests the existence of a dynamic exchange between the ADRB2 and beta-arrestins. Deubiquitinates DIO2, thereby regulating thyroid hormone regulation. Mediates deubiquitination of both 'Lys-48'- and 'Lys-63'-linked polyubiquitin chains. In Homo sapiens (Human), this protein is Ubiquitin carboxyl-terminal hydrolase 33 (USP33).